The following is a 975-amino-acid chain: Glycine dehydrogenase (decarboxylating) (975 aa).

An N6-(pyridoxal phosphate)lysine modification is found at lysine 723.

The protein belongs to the GcvP family. In terms of assembly, the glycine cleavage system is composed of four proteins: P, T, L and H. Requires pyridoxal 5'-phosphate as cofactor.

It carries out the reaction N(6)-[(R)-lipoyl]-L-lysyl-[glycine-cleavage complex H protein] + glycine + H(+) = N(6)-[(R)-S(8)-aminomethyldihydrolipoyl]-L-lysyl-[glycine-cleavage complex H protein] + CO2. Functionally, the glycine cleavage system catalyzes the degradation of glycine. The P protein binds the alpha-amino group of glycine through its pyridoxal phosphate cofactor; CO(2) is released and the remaining methylamine moiety is then transferred to the lipoamide cofactor of the H protein. The sequence is that of Glycine dehydrogenase (decarboxylating) from Burkholderia pseudomallei (strain 668).